The following is an 872-amino-acid chain: Valine--tRNA ligase (872 aa).

Positions 46 to 56 (PNVTGKLHIGH) match the 'HIGH' region motif. A 'KMSKS' region motif is present at residues 523 to 527 (KMSKS). Lys526 is an ATP binding site. A coiled-coil region spans residues 796–872 (IEIANDSFIN…KDKLKELTND (77 aa)).

This sequence belongs to the class-I aminoacyl-tRNA synthetase family. ValS type 1 subfamily. In terms of assembly, monomer.

It is found in the cytoplasm. It catalyses the reaction tRNA(Val) + L-valine + ATP = L-valyl-tRNA(Val) + AMP + diphosphate. Functionally, catalyzes the attachment of valine to tRNA(Val). As ValRS can inadvertently accommodate and process structurally similar amino acids such as threonine, to avoid such errors, it has a 'posttransfer' editing activity that hydrolyzes mischarged Thr-tRNA(Val) in a tRNA-dependent manner. The sequence is that of Valine--tRNA ligase from Mycoplasma mycoides subsp. mycoides SC (strain CCUG 32753 / NCTC 10114 / PG1).